We begin with the raw amino-acid sequence, 337 residues long: 4-hydroxythreonine-4-phosphate dehydrogenase (337 aa).

Positions 137 and 138 each coordinate substrate. A divalent metal cation-binding residues include His-167, His-212, and His-267. The substrate site is built by Lys-275, Asn-284, and Arg-293.

Belongs to the PdxA family. As to quaternary structure, homodimer. The cofactor is Zn(2+). Requires Mg(2+) as cofactor. Co(2+) is required as a cofactor.

It is found in the cytoplasm. It catalyses the reaction 4-(phosphooxy)-L-threonine + NAD(+) = 3-amino-2-oxopropyl phosphate + CO2 + NADH. It participates in cofactor biosynthesis; pyridoxine 5'-phosphate biosynthesis; pyridoxine 5'-phosphate from D-erythrose 4-phosphate: step 4/5. Functionally, catalyzes the NAD(P)-dependent oxidation of 4-(phosphooxy)-L-threonine (HTP) into 2-amino-3-oxo-4-(phosphooxy)butyric acid which spontaneously decarboxylates to form 3-amino-2-oxopropyl phosphate (AHAP). The polypeptide is 4-hydroxythreonine-4-phosphate dehydrogenase (Ectopseudomonas mendocina (strain ymp) (Pseudomonas mendocina)).